The sequence spans 942 residues: MSDYKHTLNLPETEFPMRGNLAQREPKMLQDWTNKALYHKIRAAKKGKTPFILHDGPPYANGDIHIGHAVNKILKDVIVKSKTLSDFDSPYVPGWDCHGLPIELMVEKKVGKPGKKVTAAEFRQKCRDYAEKQINGQKADFIRLGVLGEWDKPYRTMDFSSEANIIRELGNVVRSGHLEKGFKPVHWCTDCGSALAEAEVEYQDKVSPSIDVRFNIADEASFTKQFTAIGEGLGEGTISVVIWTTTPWTLPANRAVSLHPELEYSLVQVQSENGNERLVVATDLLDECVKRFGFENTHVLGTALGQALENMQVQHPFYDFTVPLILGEHVTTDSGTGCVHTAPGHGVEDFNVGRQYNLEVANPVGANGVYLENTPIFAGEHVFKANEHVVEVLAERGALVHHVKYTHSYPHCWRHKTPLIFRATPQWFISMDKNGLRAASIKEIHKTQWIPEWGESRIESMVAGRPDWCISRQRTWGVPIALFVHKDTGDLHPNTDALIEQVAQRVESEGIQAWWDIDPQEMLGDDADTFVKVLDTLDVWFDSGVSHYFVVDKRDDIPASADLYLEGSDQHRGWFMSSLMTSVATKGHAPYKQVLTHGFTVDGKGKKMSKSLGNTVAPQQVTNKLGADILRLWVASTDYRSEIAVSDEILKRSADAYRRIRNTSRFLLANLTGFNPKTDLVPFEEMVELDKWAVSRAHTMQREIVKAYEAYDLLVVTQKLMQFCSIEMGSFYLDIIKDRQYTAKSDSHARRSCQSALYHIVEALVRWMAPITSFTAQEIWQEMPWQEDEFVFTGTWYTGLTAQADNTEFNDAFWQQVLAVKDEVNRTIELARKEGTIGGSLEAEVKIYATAELAELLSKLQDEARFVFITSSATVEAVESKPADATETEVPGLWLHISASEGKKCARCWHHREDVGTNESHPELCQRCVTNVDGEGETRAYA.

A 'HIGH' region motif is present at residues Pro-58–His-68. Glu-566 lines the L-isoleucyl-5'-AMP pocket. Positions Lys-607–Ser-611 match the 'KMSKS' region motif. ATP is bound at residue Lys-610. Zn(2+) is bound by residues Cys-905, Cys-908, Cys-925, and Cys-928.

The protein belongs to the class-I aminoacyl-tRNA synthetase family. IleS type 1 subfamily. Monomer. Requires Zn(2+) as cofactor.

Its subcellular location is the cytoplasm. The catalysed reaction is tRNA(Ile) + L-isoleucine + ATP = L-isoleucyl-tRNA(Ile) + AMP + diphosphate. Functionally, catalyzes the attachment of isoleucine to tRNA(Ile). As IleRS can inadvertently accommodate and process structurally similar amino acids such as valine, to avoid such errors it has two additional distinct tRNA(Ile)-dependent editing activities. One activity is designated as 'pretransfer' editing and involves the hydrolysis of activated Val-AMP. The other activity is designated 'posttransfer' editing and involves deacylation of mischarged Val-tRNA(Ile). The polypeptide is Isoleucine--tRNA ligase (Pseudoalteromonas atlantica (strain T6c / ATCC BAA-1087)).